The following is a 115-amino-acid chain: U17-barytoxin-Tl1b (115 aa).

The first 20 residues, 1-20 (MKTIIVFLSLLVLATKFGDA), serve as a signal peptide directing secretion. The propeptide occupies 21–74 (KEGVNQKQKKEVTQNEFREEYLNEMAAMSLVQQLEAIERALFENEAGRNSRQKR). Intrachain disulfides connect Cys-75–Cys-89, Cys-82–Cys-94, and Cys-88–Cys-109.

It belongs to the neurotoxin 14 (magi-1) family. 03 (ICK-30-40) subfamily. As to expression, expressed by the venom gland.

The protein resides in the secreted. Its function is as follows. Ion channel inhibitor. The sequence is that of U17-barytoxin-Tl1b from Trittame loki (Brush-footed trapdoor spider).